The sequence spans 253 residues: Shikimate dehydrogenase (253 aa).

K63 serves as the catalytic Proton acceptor. Residue 115-119 coordinates NADP(+); it reads GAGGA.

It belongs to the shikimate dehydrogenase family.

It catalyses the reaction shikimate + NADP(+) = 3-dehydroshikimate + NADPH + H(+). Its pathway is metabolic intermediate biosynthesis; chorismate biosynthesis; chorismate from D-erythrose 4-phosphate and phosphoenolpyruvate: step 4/7. This is Shikimate dehydrogenase (aroE) from Thermotoga neapolitana (strain ATCC 49049 / DSM 4359 / NBRC 107923 / NS-E).